The following is a 197-amino-acid chain: 5'-deoxynucleotidase plu3092 (197 aa).

Substrate-binding positions include 16–17 and His-31; that span reads RW. The region spanning 28–140 is the HD domain; that stretch reads VSEHSLQVAF…IKQADSLCAY (113 aa). Residues His-31, His-66, and Asp-67 each contribute to the a divalent metal cation site. Substrate is bound by residues Asp-67, 75–78, and Asp-135; that span reads DLPT. Residue Asp-135 participates in a divalent metal cation binding.

It belongs to the 5DNU family. In terms of assembly, homodimer. Requires a divalent metal cation as cofactor.

Its subcellular location is the cytoplasm. It carries out the reaction a 2'-deoxyribonucleoside 5'-phosphate + H2O = a 2'-deoxyribonucleoside + phosphate. Catalyzes the strictly specific dephosphorylation of 2'-deoxyribonucleoside 5'-monophosphates. The chain is 5'-deoxynucleotidase plu3092 from Photorhabdus laumondii subsp. laumondii (strain DSM 15139 / CIP 105565 / TT01) (Photorhabdus luminescens subsp. laumondii).